The primary structure comprises 195 residues: Imidazoleglycerol-phosphate dehydratase (195 aa).

The protein belongs to the imidazoleglycerol-phosphate dehydratase family.

It is found in the cytoplasm. The enzyme catalyses D-erythro-1-(imidazol-4-yl)glycerol 3-phosphate = 3-(imidazol-4-yl)-2-oxopropyl phosphate + H2O. It functions in the pathway amino-acid biosynthesis; L-histidine biosynthesis; L-histidine from 5-phospho-alpha-D-ribose 1-diphosphate: step 6/9. This Thermotoga petrophila (strain ATCC BAA-488 / DSM 13995 / JCM 10881 / RKU-1) protein is Imidazoleglycerol-phosphate dehydratase.